The sequence spans 47 residues: Bacteriocin curvaticin DN317 (47 aa).

Belongs to the bacteriocin class IIA/YGNGV family.

It localises to the secreted. Has bactericidal activity against various Gram-negative Campylobacter, and the Gram-positive L.monocytogenes and B.subtilis. In vitro, inhibits C.jejuni strain ATCC 33560 (MIC=27.3 ug/ml). The chain is Bacteriocin curvaticin DN317 from Latilactobacillus curvatus (Lactobacillus curvatus).